A 289-amino-acid chain; its full sequence is 4-diphosphocytidyl-2-C-methyl-D-erythritol kinase (289 aa).

Lysine 11 is a catalytic residue. 95-105 (PMGGGIGGGSS) is an ATP binding site. Residue aspartate 137 is part of the active site.

This sequence belongs to the GHMP kinase family. IspE subfamily.

It catalyses the reaction 4-CDP-2-C-methyl-D-erythritol + ATP = 4-CDP-2-C-methyl-D-erythritol 2-phosphate + ADP + H(+). The protein operates within isoprenoid biosynthesis; isopentenyl diphosphate biosynthesis via DXP pathway; isopentenyl diphosphate from 1-deoxy-D-xylulose 5-phosphate: step 3/6. In terms of biological role, catalyzes the phosphorylation of the position 2 hydroxy group of 4-diphosphocytidyl-2C-methyl-D-erythritol. The polypeptide is 4-diphosphocytidyl-2-C-methyl-D-erythritol kinase (Aeromonas hydrophila subsp. hydrophila (strain ATCC 7966 / DSM 30187 / BCRC 13018 / CCUG 14551 / JCM 1027 / KCTC 2358 / NCIMB 9240 / NCTC 8049)).